A 486-amino-acid polypeptide reads, in one-letter code: Glycogen synthase (486 aa).

Lysine 15 lines the ADP-alpha-D-glucose pocket.

The protein belongs to the glycosyltransferase 1 family. Bacterial/plant glycogen synthase subfamily.

It catalyses the reaction [(1-&gt;4)-alpha-D-glucosyl](n) + ADP-alpha-D-glucose = [(1-&gt;4)-alpha-D-glucosyl](n+1) + ADP + H(+). Its pathway is glycan biosynthesis; glycogen biosynthesis. In terms of biological role, synthesizes alpha-1,4-glucan chains using ADP-glucose. This chain is Glycogen synthase, found in Pseudothermotoga lettingae (strain ATCC BAA-301 / DSM 14385 / NBRC 107922 / TMO) (Thermotoga lettingae).